A 460-amino-acid polypeptide reads, in one-letter code: Bifunctional protein GlmU (460 aa).

A pyrophosphorylase region spans residues 1–229 (MKNYAIILAA…FDESLGVNDR (229 aa)). Residues 8–11 (LAAG), Lys22, Gln72, and 77–78 (GT) each bind UDP-N-acetyl-alpha-D-glucosamine. Asp102 serves as a coordination point for Mg(2+). Gly139, Glu154, Asn169, and Asn227 together coordinate UDP-N-acetyl-alpha-D-glucosamine. Asn227 contacts Mg(2+). Residues 230 to 250 (LALAQAEVIMQERINKQHMLN) form a linker region. Positions 251 to 460 (GVTLQNPAAT…RLPHHPDQPQ (210 aa)) are N-acetyltransferase. Residues Arg332 and Lys350 each contribute to the UDP-N-acetyl-alpha-D-glucosamine site. The active-site Proton acceptor is the His362. Tyr365 and Asn376 together coordinate UDP-N-acetyl-alpha-D-glucosamine. Acetyl-CoA is bound by residues Ala379, 385–386 (NY), Ser404, Ala422, and Arg439.

It in the N-terminal section; belongs to the N-acetylglucosamine-1-phosphate uridyltransferase family. In the C-terminal section; belongs to the transferase hexapeptide repeat family. Homotrimer. It depends on Mg(2+) as a cofactor.

Its subcellular location is the cytoplasm. The catalysed reaction is alpha-D-glucosamine 1-phosphate + acetyl-CoA = N-acetyl-alpha-D-glucosamine 1-phosphate + CoA + H(+). It catalyses the reaction N-acetyl-alpha-D-glucosamine 1-phosphate + UTP + H(+) = UDP-N-acetyl-alpha-D-glucosamine + diphosphate. It functions in the pathway nucleotide-sugar biosynthesis; UDP-N-acetyl-alpha-D-glucosamine biosynthesis; N-acetyl-alpha-D-glucosamine 1-phosphate from alpha-D-glucosamine 6-phosphate (route II): step 2/2. It participates in nucleotide-sugar biosynthesis; UDP-N-acetyl-alpha-D-glucosamine biosynthesis; UDP-N-acetyl-alpha-D-glucosamine from N-acetyl-alpha-D-glucosamine 1-phosphate: step 1/1. Its pathway is bacterial outer membrane biogenesis; LPS lipid A biosynthesis. Catalyzes the last two sequential reactions in the de novo biosynthetic pathway for UDP-N-acetylglucosamine (UDP-GlcNAc). The C-terminal domain catalyzes the transfer of acetyl group from acetyl coenzyme A to glucosamine-1-phosphate (GlcN-1-P) to produce N-acetylglucosamine-1-phosphate (GlcNAc-1-P), which is converted into UDP-GlcNAc by the transfer of uridine 5-monophosphate (from uridine 5-triphosphate), a reaction catalyzed by the N-terminal domain. This Streptococcus equi subsp. zooepidemicus (strain ATCC 35246 / C74-63) protein is Bifunctional protein GlmU.